Consider the following 253-residue polypeptide: Transcription factor ORG2 (253 aa).

Positions 71-123 (VKKLNHNASERDRRKKINTLFSSLRSCLPASDQSKKLSIPETVSKSLKYIPEL) constitute a bHLH domain.

In terms of assembly, homodimer. Roots.

It is found in the nucleus. This is Transcription factor ORG2 (ORG2) from Arabidopsis thaliana (Mouse-ear cress).